The sequence spans 167 residues: Cytochrome c-type biogenesis protein CcmE (167 aa).

The Cytoplasmic portion of the chain corresponds to 1–7 (MTRKQRR). Residues 8 to 28 (LLMIGGAGVVLIVAVGLVLNA) form a helical; Signal-anchor for type II membrane protein membrane-spanning segment. Topologically, residues 29-167 (LRDSIVFFST…TSANAAEGGK (139 aa)) are periplasmic. Heme contacts are provided by His122 and Tyr126. Residues 137-150 (KDGHWKDDYGKKSP) are compositionally biased toward basic and acidic residues. Residues 137–167 (KDGHWKDDYGKKSPGETTAGQTSANAAEGGK) form a disordered region. Positions 151 to 161 (GETTAGQTSAN) are enriched in polar residues.

This sequence belongs to the CcmE/CycJ family.

It is found in the cell inner membrane. In terms of biological role, heme chaperone required for the biogenesis of c-type cytochromes. Transiently binds heme delivered by CcmC and transfers the heme to apo-cytochromes in a process facilitated by CcmF and CcmH. This chain is Cytochrome c-type biogenesis protein CcmE, found in Rhodopseudomonas palustris (strain ATCC BAA-98 / CGA009).